The primary structure comprises 357 residues: Dehydrogenase FUB6 (357 aa).

The segment covering 1–17 (MGGEVSNKTWVFKQSPS) has biased composition (polar residues). Positions 1–22 (MGGEVSNKTWVFKQSPSGLPEP) are disordered.

Belongs to the zinc-containing alcohol dehydrogenase family. Quinone oxidoreductase subfamily.

The protein operates within mycotoxin biosynthesis. Functionally, dehydrogenase; part of the gene cluster that mediates the biosynthesis of fusaric acid, a mycotoxin with low to moderate toxicity to animals and humans, but with high phytotoxic properties. L-aspartate is suggested as fusaric acid amino acid precursor that is activated and further processed to O-acetyl-L-homoserine by cluster enzymes aspartate kinase FUB3 and homoserine O-acetyltransferase FUB5, as well as enzymes of the primary metabolism. The polyketide synthase (PKS) FUB1 generates the triketide trans-2-hexenal which is presumptively released by the hydrolase FUB4 and linked to the NRPS-bound amino acid precursor by NAD(P)-dependent dehydrogenase FUB6. FUB1, FUB4, and the non-canonical NRPS Fub8 may form an enzyme complex. Further processing of the NRPS-bound intermediate might be carried out by FUB6 and the O-acetylhomoserine FUB7, enabling a spontaneous electrocyclization to close the carbon backbone of fusaric acid. Dihydrofusaric acid is likely to be released via reduction by the thioester reductase (TR) domain of FUB8 whereupon the final oxidation to fusaric acid may (also) be performed by the FMN-dependent dehydrogenase FUB9. This is Dehydrogenase FUB6 from Fusarium oxysporum f. sp. lycopersici (strain 4287 / CBS 123668 / FGSC 9935 / NRRL 34936) (Fusarium vascular wilt of tomato).